Consider the following 298-residue polypeptide: MVRQYKIHTNLDGTDDKVWDVTNGKVRFYQPSNLGLQSTNNIWQSNGIGVMGTRSITQPQIEFKLETFGESLEENYQLMKDFVNDILSKKFVTLEYQTEIFQVYADLALADVTKTEGYGKNGTFSEKITFDIITKWYTYENLTFDKIQNGKVIAGMSKIYGGTAPGNYKYIKGTSYTYYGESDIDRLSRWDIKEEIFSFMGILYPKLPKTPAGVRFLDDIGNEYTAIVFKTEQVQDYILINTDVNDETYQGWKGTTALNLFPVMDFERYRTRIIEKGQMELINLSKAEFKIKRKADFV.

The protein belongs to the skunalikevirus distal tail protein family. Homohexamer. Interacts with the receptor binding protein.

The protein localises to the virion. Its function is as follows. Forms the distal part of the tail. Self-associates as two rings organized back to back, with a central channel allowing DNA ejection. This chain is Distal tail protein, found in Lactococcus lactis (Lactococcus lactis bacteriophage p2).